The following is a 296-amino-acid chain: Fructose-bisphosphate aldolase class 1 (296 aa).

The active-site Proton acceptor is the glutamate 175. Lysine 212 (schiff-base intermediate with dihydroxyacetone-P) is an active-site residue.

It belongs to the class I fructose-bisphosphate aldolase family.

The catalysed reaction is beta-D-fructose 1,6-bisphosphate = D-glyceraldehyde 3-phosphate + dihydroxyacetone phosphate. It functions in the pathway carbohydrate degradation; glycolysis; D-glyceraldehyde 3-phosphate and glycerone phosphate from D-glucose: step 4/4. This chain is Fructose-bisphosphate aldolase class 1, found in Staphylococcus haemolyticus (strain JCSC1435).